A 517-amino-acid polypeptide reads, in one-letter code: Protein AGENET DOMAIN (AGD)-CONTAINING P1 (517 aa).

Residues 1–35 are disordered; sequence MLRPRRSLGVSSPAKQRKKAAPKNSMATRANRKRL. Plant Agenet, chromatin-binding regions lie at residues 37-111 and 117-173; these read SYLK…PPMS and KKIV…EWVD. The interval 177–202 is disordered; it reads KPPLEETEEEEDESEEDKLDDSEDEE. Residues 181–202 are compositionally biased toward acidic residues; the sequence is EETEEEEDESEEDKLDDSEDEE. Plant Agenet, chromatin-binding stretches follow at residues 219-287, 289-345, 378-446, and 449-505; these read QMFS…PRDE, IDFA…DWVD, QAFS…LESV, and SPFE…EWID.

Expressed ubiquitously during vegetative stage, in meristems (e.g. root tips and shoot apical meristem), and in ovules and young seeds during reproductive stage.

The protein localises to the nucleus. Heterochromatin-binding protein that preferentially occupies long transposons and specifically recognizes the histone H3 'Lys-9' methylation (H3K9me) marks, with a stronger affinity for dimethylated H3K9 (H3K9me2). Required for transcriptional silencing, non-CG DNA methylation (e.g. CHG and CHH regions), and H3K9 dimethylation (H3K9me2) at some loci. Mediates heterochromatin phase separation and chromocenter formation. In Arabidopsis thaliana (Mouse-ear cress), this protein is Protein AGENET DOMAIN (AGD)-CONTAINING P1.